The sequence spans 312 residues: HPr kinase/phosphorylase (312 aa).

Active-site residues include H139 and K160. An ATP-binding site is contributed by 154-161; that stretch reads GDSGIGKS. S161 is a Mg(2+) binding site. The Proton acceptor; for phosphorylation activity. Proton donor; for dephosphorylation activity role is filled by D178. The tract at residues 202–211 is important for the catalytic mechanism of both phosphorylation and dephosphorylation; it reads IEIRGVGIID. E203 contacts Mg(2+). R244 is an active-site residue. An important for the catalytic mechanism of dephosphorylation region spans residues 265–270; that stretch reads PVKTGR.

This sequence belongs to the HPrK/P family. As to quaternary structure, homohexamer. It depends on Mg(2+) as a cofactor.

It carries out the reaction [HPr protein]-L-serine + ATP = [HPr protein]-O-phospho-L-serine + ADP + H(+). It catalyses the reaction [HPr protein]-O-phospho-L-serine + phosphate + H(+) = [HPr protein]-L-serine + diphosphate. Its function is as follows. Catalyzes the ATP- as well as the pyrophosphate-dependent phosphorylation of a specific serine residue in HPr, a phosphocarrier protein of the phosphoenolpyruvate-dependent sugar phosphotransferase system (PTS). HprK/P also catalyzes the pyrophosphate-producing, inorganic phosphate-dependent dephosphorylation (phosphorolysis) of seryl-phosphorylated HPr (P-Ser-HPr). The two antagonistic activities of HprK/P are regulated by several intracellular metabolites, which change their concentration in response to the absence or presence of rapidly metabolisable carbon sources (glucose, fructose, etc.) in the growth medium. Therefore, by controlling the phosphorylation state of HPr, HPrK/P is a sensor enzyme that plays a major role in the regulation of carbon metabolism and sugar transport: it mediates carbon catabolite repression (CCR), and regulates PTS-catalyzed carbohydrate uptake and inducer exclusion. The chain is HPr kinase/phosphorylase from Streptococcus pneumoniae serotype 4 (strain ATCC BAA-334 / TIGR4).